The primary structure comprises 283 residues: Acetylglutamate kinase (283 aa).

Substrate contacts are provided by residues 63-64 (GG), R85, and N178.

Belongs to the acetylglutamate kinase family. ArgB subfamily.

It localises to the cytoplasm. The enzyme catalyses N-acetyl-L-glutamate + ATP = N-acetyl-L-glutamyl 5-phosphate + ADP. The protein operates within amino-acid biosynthesis; L-arginine biosynthesis; N(2)-acetyl-L-ornithine from L-glutamate: step 2/4. Catalyzes the ATP-dependent phosphorylation of N-acetyl-L-glutamate. The polypeptide is Acetylglutamate kinase (Prochlorococcus marinus (strain AS9601)).